Consider the following 88-residue polypeptide: Parvalbumin beta 3 (88 aa).

The residue at position 1 (Ala1) is an N-acetylalanine. Residues 31–66 (KSPEEVKKFFAIIDQDHSGFIEEEELKLFLQTFSAG) form the EF-hand domain. Ca(2+) contacts are provided by Asp44, Asp46, Ser48, Phe50, Glu52, Glu55, and Glu81.

It belongs to the parvalbumin family.

Functionally, in muscle, parvalbumin is thought to be involved in relaxation after contraction. It binds two calcium ions. This is Parvalbumin beta 3 from Merluccius productus (North Pacific hake).